A 194-amino-acid chain; its full sequence is MSNIKLIVGLANPGDKYAQTRHNAGAWYVQELARVCGATLVADSKYYGLTARVTLHGKDVRLLIPSTFMNLSGKSVGALANFFRIEPEEILVAHDELDMQPGVAKFKLGGGHGGHNGLKDIIAKLANNKGFYRLRIGIGHPGDKNQVSNYVLGKAPASEQTLIETVIDEAVRSTELLFNEDMAKAMHRLHSFKG.

Tyr17 is a tRNA binding site. Residue His22 is the Proton acceptor of the active site. Residues Phe68, Asn70, and Asn116 each contribute to the tRNA site.

Belongs to the PTH family. As to quaternary structure, monomer.

The protein localises to the cytoplasm. It catalyses the reaction an N-acyl-L-alpha-aminoacyl-tRNA + H2O = an N-acyl-L-amino acid + a tRNA + H(+). Functionally, hydrolyzes ribosome-free peptidyl-tRNAs (with 1 or more amino acids incorporated), which drop off the ribosome during protein synthesis, or as a result of ribosome stalling. Its function is as follows. Catalyzes the release of premature peptidyl moieties from peptidyl-tRNA molecules trapped in stalled 50S ribosomal subunits, and thus maintains levels of free tRNAs and 50S ribosomes. The sequence is that of Peptidyl-tRNA hydrolase from Shewanella sediminis (strain HAW-EB3).